The sequence spans 205 residues: Holliday junction branch migration complex subunit RuvA (205 aa).

Residues 1-62 are domain I; the sequence is MFEYVTGYVE…EDIMALYGFK (62 aa). The tract at residues 63–141 is domain II; it reads TREERLLFTK…DVVPDAFVDL (79 aa). The flexible linker stretch occupies residues 142–152; sequence FSDTESFDTKK. A domain III region spans residues 153-205; it reads GSSVELDEALEALRALGYAEREVSRVVPELLKESLTTDQYIKKALSLLLNGKR.

This sequence belongs to the RuvA family. In terms of assembly, homotetramer. Forms an RuvA(8)-RuvB(12)-Holliday junction (HJ) complex. HJ DNA is sandwiched between 2 RuvA tetramers; dsDNA enters through RuvA and exits via RuvB. An RuvB hexamer assembles on each DNA strand where it exits the tetramer. Each RuvB hexamer is contacted by two RuvA subunits (via domain III) on 2 adjacent RuvB subunits; this complex drives branch migration. In the full resolvosome a probable DNA-RuvA(4)-RuvB(12)-RuvC(2) complex forms which resolves the HJ.

Its subcellular location is the cytoplasm. The RuvA-RuvB-RuvC complex processes Holliday junction (HJ) DNA during genetic recombination and DNA repair, while the RuvA-RuvB complex plays an important role in the rescue of blocked DNA replication forks via replication fork reversal (RFR). RuvA specifically binds to HJ cruciform DNA, conferring on it an open structure. The RuvB hexamer acts as an ATP-dependent pump, pulling dsDNA into and through the RuvAB complex. HJ branch migration allows RuvC to scan DNA until it finds its consensus sequence, where it cleaves and resolves the cruciform DNA. The chain is Holliday junction branch migration complex subunit RuvA from Bacillus mycoides (strain KBAB4) (Bacillus weihenstephanensis).